A 158-amino-acid chain; its full sequence is Ribonuclease H (158 aa).

Residues G3 to E144 form the RNase H type-1 domain. D12, E50, D72, and D136 together coordinate Mg(2+).

The protein belongs to the RNase H family. Monomer. The cofactor is Mg(2+).

The protein localises to the cytoplasm. It carries out the reaction Endonucleolytic cleavage to 5'-phosphomonoester.. Endonuclease that specifically degrades the RNA of RNA-DNA hybrids. The polypeptide is Ribonuclease H (Shewanella loihica (strain ATCC BAA-1088 / PV-4)).